Reading from the N-terminus, the 87-residue chain is U3-theraphotoxin-Hhn1n (87 aa).

The first 24 residues, 1–24 (MVNMKASMFLTFAGLVLLFVVCYA), serve as a signal peptide directing secretion. Positions 25–52 (SESEEKEFPKEMLSSIFAVDNDFKQEER) are excised as a propeptide. Disulfide bonds link cysteine 54-cysteine 67, cysteine 61-cysteine 72, and cysteine 66-cysteine 79.

This sequence belongs to the neurotoxin 10 (Hwtx-1) family. 51 (Hntx-8) subfamily. Hntx-8 sub-subfamily. In terms of tissue distribution, expressed by the venom gland.

Its subcellular location is the secreted. Weakly inhibits Kv11.1/KCNH2/ERG1, Kv1.2/KCNA2, Kv1.3/KCNA3, and Kv2.1/KCNB1. The sequence is that of U3-theraphotoxin-Hhn1n from Cyriopagopus hainanus (Chinese bird spider).